Consider the following 236-residue polypeptide: uncharacterized protein (236 aa).

A signal peptide spans 1 to 29; it reads MKGGDKMKKLILLMLLLPISLIGCTDEES.

This is an uncharacterized protein from Archaeoglobus fulgidus (strain ATCC 49558 / DSM 4304 / JCM 9628 / NBRC 100126 / VC-16).